The primary structure comprises 93 residues: Small ribosomal subunit protein uS19 (93 aa).

Belongs to the universal ribosomal protein uS19 family.

Its function is as follows. Protein S19 forms a complex with S13 that binds strongly to the 16S ribosomal RNA. This chain is Small ribosomal subunit protein uS19, found in Geotalea daltonii (strain DSM 22248 / JCM 15807 / FRC-32) (Geobacter daltonii).